The sequence spans 225 residues: Cytidylate kinase (225 aa).

ATP is bound at residue 12–20 (GPSGAGKGT).

It belongs to the cytidylate kinase family. Type 1 subfamily.

It is found in the cytoplasm. It carries out the reaction CMP + ATP = CDP + ADP. The catalysed reaction is dCMP + ATP = dCDP + ADP. This chain is Cytidylate kinase, found in Stenotrophomonas maltophilia (strain K279a).